The chain runs to 506 residues: Histidine ammonia-lyase (506 aa).

A cross-link (5-imidazolinone (Ala-Gly)) is located at residues 142–144 (ASG). The residue at position 143 (Ser-143) is a 2,3-didehydroalanine (Ser).

Belongs to the PAL/histidase family. Post-translationally, contains an active site 4-methylidene-imidazol-5-one (MIO), which is formed autocatalytically by cyclization and dehydration of residues Ala-Ser-Gly.

It localises to the cytoplasm. The catalysed reaction is L-histidine = trans-urocanate + NH4(+). Its pathway is amino-acid degradation; L-histidine degradation into L-glutamate; N-formimidoyl-L-glutamate from L-histidine: step 1/3. The protein is Histidine ammonia-lyase of Bacillus cereus (strain ATCC 14579 / DSM 31 / CCUG 7414 / JCM 2152 / NBRC 15305 / NCIMB 9373 / NCTC 2599 / NRRL B-3711).